The sequence spans 534 residues: Probable alpha-galactosidase A (534 aa).

Residues 1–25 (MRLITRWIPLANALASTMPVQVVAS) form the signal peptide. A disulfide bridge links cysteine 47 with cysteine 79. N-linked (GlcNAc...) asparagine glycans are attached at residues asparagine 50, asparagine 88, asparagine 94, and asparagine 124. Cysteine 127 and cysteine 157 are joined by a disulfide. Residue aspartate 155 is the Nucleophile of the active site. Asparagine 204 carries an N-linked (GlcNAc...) asparagine glycan. Aspartate 213 serves as the catalytic Proton donor. The region spanning 413–534 (CSQVIPTGLI…GLPAGVHVAL (122 aa)) is the Ricin B-type lectin domain. A disulfide bridge links cysteine 430 with cysteine 443. An N-linked (GlcNAc...) asparagine glycan is attached at asparagine 444. The cysteines at positions 468 and 481 are disulfide-linked.

It belongs to the glycosyl hydrolase 27 family.

The protein localises to the secreted. It catalyses the reaction Hydrolysis of terminal, non-reducing alpha-D-galactose residues in alpha-D-galactosides, including galactose oligosaccharides, galactomannans and galactolipids.. Its function is as follows. Hydrolyzes a variety of simple alpha-D-galactoside as well as more complex molecules such as oligosaccharides and polysaccharides. This chain is Probable alpha-galactosidase A (aglA), found in Aspergillus oryzae (strain ATCC 42149 / RIB 40) (Yellow koji mold).